Consider the following 336-residue polypeptide: tRNA N6-adenosine threonylcarbamoyltransferase (336 aa).

Histidine 112 and histidine 116 together coordinate Fe cation. Substrate contacts are provided by residues 136–140 (LVSGG), aspartate 169, glycine 182, and asparagine 276. Aspartate 304 is a binding site for Fe cation.

This sequence belongs to the KAE1 / TsaD family. It depends on Fe(2+) as a cofactor.

The protein resides in the cytoplasm. The catalysed reaction is L-threonylcarbamoyladenylate + adenosine(37) in tRNA = N(6)-L-threonylcarbamoyladenosine(37) in tRNA + AMP + H(+). Its function is as follows. Required for the formation of a threonylcarbamoyl group on adenosine at position 37 (t(6)A37) in tRNAs that read codons beginning with adenine. Is involved in the transfer of the threonylcarbamoyl moiety of threonylcarbamoyl-AMP (TC-AMP) to the N6 group of A37, together with TsaE and TsaB. TsaD likely plays a direct catalytic role in this reaction. This Francisella tularensis subsp. holarctica (strain LVS) protein is tRNA N6-adenosine threonylcarbamoyltransferase.